Consider the following 179-residue polypeptide: Large ribosomal subunit protein uL10 (179 aa).

It belongs to the universal ribosomal protein uL10 family. As to quaternary structure, part of the ribosomal stalk of the 50S ribosomal subunit. The N-terminus interacts with L11 and the large rRNA to form the base of the stalk. The C-terminus forms an elongated spine to which L12 dimers bind in a sequential fashion forming a multimeric L10(L12)X complex.

Forms part of the ribosomal stalk, playing a central role in the interaction of the ribosome with GTP-bound translation factors. The polypeptide is Large ribosomal subunit protein uL10 (Kosmotoga olearia (strain ATCC BAA-1733 / DSM 21960 / TBF 19.5.1)).